A 129-amino-acid chain; its full sequence is uncharacterized protein (129 aa).

A helical membrane pass occupies residues 77–97 (ILAVFIISFIIVVVGVLLLGL). A disordered region spans residues 109 to 129 (SSNDKKLQSNDEEKQALAEKA). A compositionally biased stretch (basic and acidic residues) spans 111 to 129 (NDKKLQSNDEEKQALAEKA).

It is found in the vacuole membrane. This is an uncharacterized protein from Saccharomyces cerevisiae (strain ATCC 204508 / S288c) (Baker's yeast).